Here is a 395-residue protein sequence, read N- to C-terminus: Protochlorophyllide reductase B, chloroplastic (395 aa).

The N-terminal 59 residues, M1 to A59, are a transit peptide targeting the chloroplast.

This sequence belongs to the short-chain dehydrogenases/reductases (SDR) family. POR subfamily.

The protein resides in the plastid. It localises to the chloroplast. It carries out the reaction chlorophyllide a + NADP(+) = protochlorophyllide a + NADPH + H(+). The protein operates within porphyrin-containing compound metabolism; chlorophyll biosynthesis. Functionally, phototransformation of protochlorophyllide (Pchlide) to chlorophyllide (Chlide). This chain is Protochlorophyllide reductase B, chloroplastic (PORB), found in Hordeum vulgare (Barley).